The chain runs to 76 residues: Kappa-actitoxin-Avd4d (76 aa).

The signal sequence occupies residues 1 to 19; sequence MNKALFLCLVVLCAAVVFA. The propeptide occupies 20–31; sequence AEDLQKAKHVPF. Cystine bridges form between cysteine 37–cysteine 72, cysteine 39–cysteine 65, and cysteine 55–cysteine 73.

This sequence belongs to the sea anemone type 3 (BDS) potassium channel toxin family. Moderately expressed in the ectodermal tissue from the distal and proximal tentacles, body wall, and oral disk.

It is found in the secreted. It localises to the nematocyst. Functionally, blocks Kv3 voltage-gated potassium channels. Reduces blood pressure. This is Kappa-actitoxin-Avd4d from Anemonia viridis (Snakelocks anemone).